A 543-amino-acid chain; its full sequence is Protein P78/83 (543 aa).

Disordered regions lie at residues 147-222 (QALP…QPAA), 235-325 (RNEK…SLSN), and 373-400 (MAKS…ANTP). A compositionally biased stretch (pro residues) spans 182-221 (AAPPPPPSPVPNIPAPPPPPPPSMSELPPAPPMPTEPQPA). Positions 226–246 (DRQQLLEAIRNEKNRTRLRPV) constitute a WH2 domain. The span at 271–321 (PKPPSASPPPPPPPPPPPAPPAPPPMVDLSSAPPPPPLVDLPSEMLPPPAP) shows a compositional bias: pro residues. A compositionally biased stretch (polar residues) spans 375–384 (KSSSEATSND).

In terms of assembly, forms a complex with proteins C42 and E27. Interacts with host actin-related protein 2/3 complex. Interacts with protein Ac102.

It localises to the host cytoplasm. The protein localises to the host nucleus. In terms of biological role, plays a role in the transport of the nucleocapsids from the cytoplasm toward the host nucleus together with the host actin-polymerizing Arp2/3 complex. The sequence is that of Protein P78/83 (P61) from Lepidoptera (butterflies and moths).